The sequence spans 355 residues: Tetraacyldisaccharide 4'-kinase (355 aa).

ATP is bound at residue 48–55 (SVGGTGKT).

The protein belongs to the LpxK family.

It catalyses the reaction a lipid A disaccharide + ATP = a lipid IVA + ADP + H(+). It functions in the pathway glycolipid biosynthesis; lipid IV(A) biosynthesis; lipid IV(A) from (3R)-3-hydroxytetradecanoyl-[acyl-carrier-protein] and UDP-N-acetyl-alpha-D-glucosamine: step 6/6. Transfers the gamma-phosphate of ATP to the 4'-position of a tetraacyldisaccharide 1-phosphate intermediate (termed DS-1-P) to form tetraacyldisaccharide 1,4'-bis-phosphate (lipid IVA). This chain is Tetraacyldisaccharide 4'-kinase, found in Pelodictyon phaeoclathratiforme (strain DSM 5477 / BU-1).